A 1899-amino-acid chain; its full sequence is MLQQFCLWKWLAVGIAVATILASSLAQNDEDCKLARTGPPATIVPIDEESRNGTILVDNMLIKGTAAGPDPTIELSLKDNVDYWVILDPISQRLYLNSTGRVLDRDPPMSIQSIVVQVQCVNKKVGTIINHEVRIVVRDRNDNSPQFQQQRYYVAVNELTPVGTTIFTGFSGNNGATDIDDGPNGQIEYVIQYNPNDKTSNRTFDIPLTLSGAVVLRERLNYEEKTRYFVIVQANDRAQNLHERRTSTTTLTVDVLDGDDLGPMFLPCVLVNNTRDCRPLTYQASLPELTDPVHVNPISVTPPIQAIDQDRNIQPPSDRPGILYSILVGTPEDYPQYFHMNLTTAELTLLKPINRDLHQKFDLVIKAEQDNGHPLPAFANLHIEVLDENNQKPYFTKSTYEGFILESSPVGTTISDSRNLTSPLQITVLDNDVEETKDPQLHLFLNDYNTFFTVTQSGITRYLTLLQPVDREAQQLYTFSMIASDGVQESTPVTVNIVVIDANDNSPTFSNISYNVKIYTDMGPGEGVIKLTAVDADEGPNGQIVYEILAGDQGDFIINDRTGLIAIAPGVVLSVGRSYALTVKASDSAPPAQRRSSITTVYIEVLPPNNQSPPRFPQLMYSLEVSEAMRTGAILLNLQAFDREGDPIRYLIENGDPQQVFNLSQSSGLLALGKPLDRESTDRYILIVTASDGRPDGTSTATVNIVVTDVNDNGPVFDMFLPKNLSVQEEEANAFVGQVRATDPDAGVNGQVHYSLANFKNLFRITSNGSIYTAVKLNREVRDYYELIVEATDGAVDPRRSTLTLAIKVLDIDDNSPVFTNASYSVLVPENLPPGTVFLQIEAKDVDLGSNVTYRIRTQEALEYFALNKYTGELSLLKSLDYESFSDTDATFTFLVEAFDSKGTMPPGLATVTVRVKDMNDYSPVFSKTLYRGMVAPDAVKGTVITTVSAEDQDPPGTPASRVRYKVDVVQFPYSASIFDVEENSGRVVTRVNLNEEPSTVFKLVVIAYDDGDPVKFNTTTVEIAVLQPSVIPRFTQDEYRPPPVSESAPKGTVVTVVMAAALNQTIVYSIVSGNEEDVFAINNRTGVISVKKPLDYERVTSYELRVQADSLQVVRSNLRVPSKSNTAKVFIEVKDENDHAPVFTKKMYIGGVSEDAKMFSSVLKVKADDKDTGNYSAMQYRLIIPPIKDGKEGFVIEAYTGLIKTAMLFKNMRRSYFKFQVIATDDYGKGLSSKADVLVSVVNQLDMQVIVSNVPPTLVEQNKDQLIGILERYVQDQIPGATVVVESIGARRFGDGYSEEDYTKSDLMVYAIDPQTNRAIMRNELFKFLDGKLLDINKEFQPYLGQGGRILEIRTPDVVANVKKQAQAVGYTEGALLALAVIIILCCMPAILIVMVSYRQRQAECAKTARIQMALPAGKPASTAANNLYEELGDSTILFLLYHFQQSRGKKSVLEEGDRQRVISSFASRAIEAHKQSNINGSLNNNLPKSSSNITFLSDENPLTTQNPLYVEGVTQSPAAAGLLRKRSDALDTLSPMQLVLRDASLGGSHRAWTVPAHVTKRHAPGSLSRPVIMDPVQWQQERLKAENEGTENQHSRVDISSPLFQKISGPTLTVKEKARQFEQQALQEMKQVKSPDVKSTRSPTHSICLQERDNTLEQSPKSVFASPCLRSSPLSSPTPCEVVEPEPSAVPSVIITHHDYPEELSPPPTRKPTPPSFRIKKPVCQSFLAPQTKGEVTENIPDPPKTPPPPPPLLPPPPPSPPLLPPHPPTLPLASVPSSSSLPSTQHLSPAKHSKSPAKQPAVPPPAAVPEPPPRRELKGILKNIQNLAAIEKSVANMYSQIDKNHVLPKHISKLKPVATPELPTPEAAAEHNQQNGNLSCVVEELEKRFPSQSTAL.

Positions 1-26 (MLQQFCLWKWLAVGIAVATILASSLA) are cleaved as a signal peptide. Residues 27 to 1376 (QNDEDCKLAR…AQAVGYTEGA (1350 aa)) lie on the Extracellular side of the membrane. Cys32 and Cys120 form a disulfide bridge. Cadherin domains lie at 38 to 147 (GPPA…SPQF), 148 to 265 (QQQR…GPMF), 278 to 395 (RPLT…KPYF), 396 to 509 (TKST…SPTF), 510 to 616 (SNIS…PPRF), 617 to 717 (PQLM…GPVF), 719 to 819 (MFLP…SPVF), 820 to 926 (TNAS…SPVF), 927 to 1035 (SKTL…IPRF), 1037 to 1144 (QDEY…APVF), and 1145 to 1259 (TKKM…PPTL). Residues 1377 to 1397 (LLALAVIIILCCMPAILIVMV) traverse the membrane as a helical segment. At 1398-1899 (SYRQRQAECA…KRFPSQSTAL (502 aa)) the chain is on the cytoplasmic side. Disordered regions lie at residues 1668-1687 (SPCLRSSPLSSPTPCEVVEP), 1700-1721 (HDYPEELSPPPTRKPTPPSFRI), and 1734-1820 (TKGE…RREL). Pro residues-rich tracts occupy residues 1706-1717 (LSPPPTRKPTPP) and 1743-1773 (PDPPKTPPPPPPLLPPPPPSPPLLPPHPPTL). The segment covering 1774-1791 (PLASVPSSSSLPSTQHLS) has biased composition (low complexity). Residues 1804–1814 (AVPPPAAVPEP) are compositionally biased toward pro residues.

In terms of tissue distribution, in the utricle, localizes to the distal region of the kinocilium and near the tips of the stereocilia.

The protein resides in the cell membrane. Its function is as follows. Calcium-dependent cell-adhesion protein. Required for inner ear neuroepithelial cell elaboration and cochlear function. Probably involved in the maintenance of normal retinal function. The protein is Protocadherin-15 (Pcdh15) of Gallus gallus (Chicken).